The chain runs to 123 residues: uncharacterized protein (123 aa).

To insertion element IS1016 transposase.

This is an uncharacterized protein from Haemophilus influenzae (strain ATCC 51907 / DSM 11121 / KW20 / Rd).